The primary structure comprises 159 residues: Probable cyclic pyranopterin monophosphate synthase (159 aa).

Substrate-binding positions include Leu75 to His77 and Met111 to Glu112. The active site involves Asp126.

This sequence belongs to the MoaC family. Homohexamer; trimer of dimers.

The enzyme catalyses (8S)-3',8-cyclo-7,8-dihydroguanosine 5'-triphosphate = cyclic pyranopterin phosphate + diphosphate. The protein operates within cofactor biosynthesis; molybdopterin biosynthesis. In terms of biological role, catalyzes the conversion of (8S)-3',8-cyclo-7,8-dihydroguanosine 5'-triphosphate to cyclic pyranopterin monophosphate (cPMP). In Pyrococcus abyssi (strain GE5 / Orsay), this protein is Probable cyclic pyranopterin monophosphate synthase.